The sequence spans 156 residues: Small ribosomal subunit protein uS7 (156 aa).

This sequence belongs to the universal ribosomal protein uS7 family. Part of the 30S ribosomal subunit. Contacts proteins S9 and S11.

In terms of biological role, one of the primary rRNA binding proteins, it binds directly to 16S rRNA where it nucleates assembly of the head domain of the 30S subunit. Is located at the subunit interface close to the decoding center, probably blocks exit of the E-site tRNA. The sequence is that of Small ribosomal subunit protein uS7 from Prochlorococcus marinus (strain MIT 9211).